The chain runs to 255 residues: Putative glutamine amidotransferase YafJ (255 aa).

The active-site For GATase activity is the cysteine 2. The region spanning cysteine 2–glycine 251 is the Glutamine amidotransferase type-2 domain.

The polypeptide is Putative glutamine amidotransferase YafJ (yafJ) (Escherichia coli (strain K12)).